A 140-amino-acid chain; its full sequence is Nucleoside triphosphatase NudI (140 aa).

The region spanning 1-140 (MRHRTIVCPL…RVTLSLKGLL (140 aa)) is the Nudix hydrolase domain. Positions 38-58 (GVEPGERIEEALRREIREELG) match the Nudix box motif.

The protein belongs to the Nudix hydrolase family. NudI subfamily. In terms of assembly, monomer. Mg(2+) is required as a cofactor.

The enzyme catalyses a ribonucleoside 5'-triphosphate + H2O = a ribonucleoside 5'-phosphate + diphosphate + H(+). It carries out the reaction a 2'-deoxyribonucleoside 5'-triphosphate + H2O = a 2'-deoxyribonucleoside 5'-phosphate + diphosphate + H(+). The catalysed reaction is dUTP + H2O = dUMP + diphosphate + H(+). It catalyses the reaction dTTP + H2O = dTMP + diphosphate + H(+). The enzyme catalyses dCTP + H2O = dCMP + diphosphate + H(+). Catalyzes the hydrolysis of nucleoside triphosphates, with a preference for pyrimidine deoxynucleoside triphosphates (dUTP, dTTP and dCTP). The chain is Nucleoside triphosphatase NudI from Klebsiella pneumoniae subsp. pneumoniae (strain ATCC 700721 / MGH 78578).